We begin with the raw amino-acid sequence, 498 residues long: ATP synthase subunit beta, chloroplastic (498 aa).

ATP is bound at residue 172–179 (GGAGVGKT).

The protein belongs to the ATPase alpha/beta chains family. As to quaternary structure, F-type ATPases have 2 components, CF(1) - the catalytic core - and CF(0) - the membrane proton channel. CF(1) has five subunits: alpha(3), beta(3), gamma(1), delta(1), epsilon(1). CF(0) has four main subunits: a(1), b(1), b'(1) and c(9-12).

It is found in the plastid. The protein localises to the chloroplast thylakoid membrane. It carries out the reaction ATP + H2O + 4 H(+)(in) = ADP + phosphate + 5 H(+)(out). Produces ATP from ADP in the presence of a proton gradient across the membrane. The catalytic sites are hosted primarily by the beta subunits. This is ATP synthase subunit beta, chloroplastic from Lemna minor (Common duckweed).